A 362-amino-acid polypeptide reads, in one-letter code: 3-dehydroquinate synthase (362 aa).

Residues 70 to 75, 104 to 108, 128 to 129, Lys-141, Lys-150, and 168 to 171 contribute to the NAD(+) site; these read EGEQYK, GVIGD, TT, and TLTT. Residues Glu-183, His-246, and His-263 each contribute to the Zn(2+) site.

It belongs to the sugar phosphate cyclases superfamily. Dehydroquinate synthase family. Co(2+) is required as a cofactor. The cofactor is Zn(2+). NAD(+) serves as cofactor.

It is found in the cytoplasm. It catalyses the reaction 7-phospho-2-dehydro-3-deoxy-D-arabino-heptonate = 3-dehydroquinate + phosphate. The protein operates within metabolic intermediate biosynthesis; chorismate biosynthesis; chorismate from D-erythrose 4-phosphate and phosphoenolpyruvate: step 2/7. Catalyzes the conversion of 3-deoxy-D-arabino-heptulosonate 7-phosphate (DAHP) to dehydroquinate (DHQ). This is 3-dehydroquinate synthase from Histophilus somni (strain 2336) (Haemophilus somnus).